The following is a 284-amino-acid chain: Bifunctional protein FolD (284 aa).

NADP(+) is bound by residues 163–165 (GAS), Ile188, and Ile229.

It belongs to the tetrahydrofolate dehydrogenase/cyclohydrolase family. Homodimer.

It carries out the reaction (6R)-5,10-methylene-5,6,7,8-tetrahydrofolate + NADP(+) = (6R)-5,10-methenyltetrahydrofolate + NADPH. It catalyses the reaction (6R)-5,10-methenyltetrahydrofolate + H2O = (6R)-10-formyltetrahydrofolate + H(+). It participates in one-carbon metabolism; tetrahydrofolate interconversion. Functionally, catalyzes the oxidation of 5,10-methylenetetrahydrofolate to 5,10-methenyltetrahydrofolate and then the hydrolysis of 5,10-methenyltetrahydrofolate to 10-formyltetrahydrofolate. The sequence is that of Bifunctional protein FolD from Nautilia profundicola (strain ATCC BAA-1463 / DSM 18972 / AmH).